We begin with the raw amino-acid sequence, 144 residues long: C-C motif chemokine 25 (144 aa).

The N-terminal stretch at 1 to 23 is a signal peptide; sequence MKLWLFACLVACFVGAWMPVVHA. 2 disulfide bridges follow: C30-C58 and C31-C73. Residues 98–144 are disordered; it reads KSASDSQTERKKSNHMKSKVENPNSTSVRSATLGHPRMVMMPRKTNN. The segment covering 118–127 has biased composition (polar residues); that stretch reads ENPNSTSVRS.

This sequence belongs to the intercrine beta (chemokine CC) family. In terms of tissue distribution, specifically expressed by thymic dendritic cells. High levels in thymus and small intestine.

It localises to the secreted. In terms of biological role, potentially involved in T-cell development. Recombinant protein shows chemotactic activity on thymocytes, macrophages, THP-1 cells, and dendritics cells but is inactive on peripheral blood lymphocytes and neutrophils. Binds to CCR9. Binds to atypical chemokine receptor ACKR4 and mediates the recruitment of beta-arrestin (ARRB1/2) to ACKR4. This Mus musculus (Mouse) protein is C-C motif chemokine 25 (Ccl25).